The chain runs to 460 residues: MCTPCCVSQLACCCGSAACSLCCGCCPKIKQSTSTRFMYALFFMLVTVTCVIMMSPTVEMAMREHIPFYSQMCQQLNAGENCSTLVGYSAVYKVCFGMACFFFFFAVFTIRVQNSTGCRAAVHNGFWFFKFVALLACCAGGFFLPNQDQFLEVWRYVGAAGGFLFIIIQLMLLVQFAHRWNQNWSSGATYNKLWYAALALVTLVLFSVAVGGMVFMFMYYTHPEACFLNKIFLGVNGGLCFIVSLLAISPCIQTFQPTSGLLQPAVITLYVMYLTFSALASKPIEMVEDEIKGNITVCVFPFKSGLKSDTNIVTGVGTAILFCCILYSCLISTTKRSSAALQVYRNDMPENERARCCFCWVDDTEDYDDEKTSGGQNVKYDERDGTVYSYCFFHFVFFLGSLYVMMTVTNWFHYDNAKIERLLEGSWSVFWIKMASSWVCLFFYMWTLVVPMLFPQRFQA.

Residues 1 to 36 (MCTPCCVSQLACCCGSAACSLCCGCCPKIKQSTSTR) are Extracellular-facing. The chain crosses the membrane as a helical span at residues 37-57 (FMYALFFMLVTVTCVIMMSPT). The Cytoplasmic portion of the chain corresponds to 58-89 (VEMAMREHIPFYSQMCQQLNAGENCSTLVGYS). Residues 90 to 110 (AVYKVCFGMACFFFFFAVFTI) form a helical membrane-spanning segment. At 111-124 (RVQNSTGCRAAVHN) the chain is on the extracellular side. Residue asparagine 114 is glycosylated (N-linked (GlcNAc...) asparagine). A helical transmembrane segment spans residues 125 to 145 (GFWFFKFVALLACCAGGFFLP). Residues 146-156 (NQDQFLEVWRY) lie on the Cytoplasmic side of the membrane. A helical transmembrane segment spans residues 157–177 (VGAAGGFLFIIIQLMLLVQFA). Residues 178–197 (HRWNQNWSSGATYNKLWYAA) lie on the Extracellular side of the membrane. N-linked (GlcNAc...) asparagine glycosylation is present at asparagine 183. Residues 198–218 (LALVTLVLFSVAVGGMVFMFM) traverse the membrane as a helical segment. Residues 219-230 (YYTHPEACFLNK) are Cytoplasmic-facing. Residues 231 to 251 (IFLGVNGGLCFIVSLLAISPC) traverse the membrane as a helical segment. Over 252 to 259 (IQTFQPTS) the chain is Extracellular. A helical membrane pass occupies residues 260–280 (GLLQPAVITLYVMYLTFSALA). Residues 281 to 311 (SKPIEMVEDEIKGNITVCVFPFKSGLKSDTN) are Cytoplasmic-facing. Residues 312–332 (IVTGVGTAILFCCILYSCLIS) traverse the membrane as a helical segment. The Extracellular segment spans residues 333–391 (TTKRSSAALQVYRNDMPENERARCCFCWVDDTEDYDDEKTSGGQNVKYDERDGTVYSYC). Residues 392 to 412 (FFHFVFFLGSLYVMMTVTNWF) form a helical membrane-spanning segment. At 413 to 433 (HYDNAKIERLLEGSWSVFWIK) the chain is on the cytoplasmic side. The chain crosses the membrane as a helical span at residues 434–454 (MASSWVCLFFYMWTLVVPMLF). The Extracellular segment spans residues 455 to 460 (PQRFQA).

The protein belongs to the TDE1 family.

The protein resides in the cell membrane. The enzyme catalyses a 1,2-diacyl-sn-glycero-3-phospho-L-serine(in) = a 1,2-diacyl-sn-glycero-3-phospho-L-serine(out). It carries out the reaction a 1,2-diacyl-sn-glycero-3-phosphocholine(in) = a 1,2-diacyl-sn-glycero-3-phosphocholine(out). It catalyses the reaction a 1,2-diacyl-sn-glycero-3-phosphoethanolamine(in) = a 1,2-diacyl-sn-glycero-3-phosphoethanolamine(out). In terms of biological role, restriction factor required to restrict infectivity of gammaretroviruses: acts by inhibiting an early step of viral infection. Impairs the penetration of the viral particle into the cytoplasm. Non-ATP-dependent, non-specific lipid transporter for phosphatidylserine, phosphatidylcholine, and phosphatidylethanolamine. Functions as a scramblase that flips lipids in both directions across the membrane. Phospholipid scrambling results in gammaretroviral surface exposure of phosphatidylserine and loss of membrane asymmetry, which leads to loss of infectivity. Enhances the incorporation of serine into phosphatidylserine and sphingolipids. In Danio rerio (Zebrafish), this protein is Serine incorporator 5 (serinc5).